Reading from the N-terminus, the 261-residue chain is Imidazole glycerol phosphate synthase subunit HisF (261 aa).

Residues Asp-16 and Asp-135 contribute to the active site.

The protein belongs to the HisA/HisF family. In terms of assembly, heterodimer of HisH and HisF.

It localises to the cytoplasm. It catalyses the reaction 5-[(5-phospho-1-deoxy-D-ribulos-1-ylimino)methylamino]-1-(5-phospho-beta-D-ribosyl)imidazole-4-carboxamide + L-glutamine = D-erythro-1-(imidazol-4-yl)glycerol 3-phosphate + 5-amino-1-(5-phospho-beta-D-ribosyl)imidazole-4-carboxamide + L-glutamate + H(+). The protein operates within amino-acid biosynthesis; L-histidine biosynthesis; L-histidine from 5-phospho-alpha-D-ribose 1-diphosphate: step 5/9. IGPS catalyzes the conversion of PRFAR and glutamine to IGP, AICAR and glutamate. The HisF subunit catalyzes the cyclization activity that produces IGP and AICAR from PRFAR using the ammonia provided by the HisH subunit. This is Imidazole glycerol phosphate synthase subunit HisF from Mycobacterium sp. (strain JLS).